The primary structure comprises 394 residues: Phosphopentomutase (394 aa).

Mn(2+) contacts are provided by aspartate 14, aspartate 287, histidine 292, aspartate 328, histidine 329, and histidine 340.

It belongs to the phosphopentomutase family. The cofactor is Mn(2+).

The protein resides in the cytoplasm. It catalyses the reaction 2-deoxy-alpha-D-ribose 1-phosphate = 2-deoxy-D-ribose 5-phosphate. The catalysed reaction is alpha-D-ribose 1-phosphate = D-ribose 5-phosphate. It participates in carbohydrate degradation; 2-deoxy-D-ribose 1-phosphate degradation; D-glyceraldehyde 3-phosphate and acetaldehyde from 2-deoxy-alpha-D-ribose 1-phosphate: step 1/2. Isomerase that catalyzes the conversion of deoxy-ribose 1-phosphate (dRib-1-P) and ribose 1-phosphate (Rib-1-P) to deoxy-ribose 5-phosphate (dRib-5-P) and ribose 5-phosphate (Rib-5-P), respectively. The protein is Phosphopentomutase of Listeria monocytogenes serotype 4b (strain CLIP80459).